A 109-amino-acid chain; its full sequence is Thioredoxin 2 (109 aa).

The Thioredoxin domain maps to 2–109 (SGKYFEATDQ…IAKKLDEHIG (108 aa)). Cysteine 33 and cysteine 36 are disulfide-bonded.

It belongs to the thioredoxin family.

In terms of biological role, participates in various redox reactions through the reversible oxidation of its active center dithiol to a disulfide and catalyzes dithiol-disulfide exchange reactions. The polypeptide is Thioredoxin 2 (trx2) (Chlorobaculum tepidum (strain ATCC 49652 / DSM 12025 / NBRC 103806 / TLS) (Chlorobium tepidum)).